The following is a 350-amino-acid chain: Galactokinase (350 aa).

14–17 (EHTD) is a substrate binding site. ATP-binding positions include S46 and 96-102 (GAGLSSS). Mg(2+)-binding residues include S102 and E134. The Proton acceptor role is filled by D146. Y196 contacts substrate.

Belongs to the GHMP kinase family. GalK subfamily.

It is found in the cytoplasm. The catalysed reaction is alpha-D-galactose + ATP = alpha-D-galactose 1-phosphate + ADP + H(+). It participates in carbohydrate metabolism; galactose metabolism. Catalyzes the transfer of the gamma-phosphate of ATP to D-galactose to form alpha-D-galactose-1-phosphate (Gal-1-P). This chain is Galactokinase, found in Thermotoga neapolitana.